The following is a 187-amino-acid chain: Cell division protein SepF (187 aa).

Positions 21–97 (EVEVPDKQQQ…ATPNNASQES (77 aa)) are disordered. Polar residues-rich tracts occupy residues 38–63 (EQSQ…YTTT) and 70–97 (RMSN…SQES).

It belongs to the SepF family. In terms of assembly, homodimer. Interacts with FtsZ.

The protein localises to the cytoplasm. Its function is as follows. Cell division protein that is part of the divisome complex and is recruited early to the Z-ring. Probably stimulates Z-ring formation, perhaps through the cross-linking of FtsZ protofilaments. Its function overlaps with FtsA. This is Cell division protein SepF from Staphylococcus aureus (strain Mu3 / ATCC 700698).